The primary structure comprises 530 residues: Pentatricopeptide repeat-containing protein At3g51320 (530 aa).

PPR repeat units lie at residues 82-116, 117-151, 152-182, 183-217, 218-248, 249-283, 284-314, 315-349, 350-380, and 386-420; these read KLYC…GFVP, DSYT…GCDQ, VLPV…IPKR, DIVS…NIIS, WNIM…GFQG, NEST…FLNS, SVVI…LSIR, NKVT…MLRP, DEVT…MVDE, and NFGH…DVTP. Positions 424 to 499 are type E motif; it reads KWANLLSSSR…IPGCGLVDLK (76 aa).

Belongs to the PPR family. PCMP-E subfamily.

This is Pentatricopeptide repeat-containing protein At3g51320 from Arabidopsis thaliana (Mouse-ear cress).